We begin with the raw amino-acid sequence, 206 residues long: Protein GET1 (206 aa).

The Lumenal portion of the chain corresponds to 1–4; sequence MPSL. The helical transmembrane segment at 5 to 24 threads the bilayer; that stretch reads LITALFLNVIIYVINTVGAA. The Cytoplasmic segment spans residues 25-110; that stretch reads TVDGLLWLLY…TFDITIKIAR (86 aa). A coiled-coil region spans residues 75-100; it reads AKLRRRHDKALEAYEAKNNELTQSKS. The chain crosses the membrane as a helical span at residues 111–131; the sequence is WAATSGLMLFLQFWYSKTPIF. The Lumenal segment spans residues 132–155; the sequence is TLPPGWIPWQVQWVLSFPRAPMGT. Residues 156-172 traverse the membrane as a helical segment; it reads VSIQIWSGACATVVALV. Residues 173–206 lie on the Cytoplasmic side of the membrane; the sequence is GDAMKASLAYVSKPKIDRIKLGATMEGKEGKKRQ.

The protein belongs to the WRB/GET1 family. In terms of assembly, interacts with GET3.

The protein resides in the endoplasmic reticulum membrane. Required for the post-translational delivery of tail-anchored (TA) proteins to the endoplasmic reticulum. Acts as a membrane receptor for soluble GET3, which recognizes and selectively binds the transmembrane domain of TA proteins in the cytosol. The sequence is that of Protein GET1 from Ajellomyces capsulatus (strain H143) (Darling's disease fungus).